The primary structure comprises 417 residues: Dihydrolipoyllysine-residue succinyltransferase component of 2-oxoglutarate dehydrogenase complex (417 aa).

Residues 1–76 (MAEIKVPELA…QVGEIIGTIS (76 aa)) enclose the Lipoyl-binding domain. N6-lipoyllysine is present on Lys42. A disordered region spans residues 75–191 (ISEGAGESSA…SFDKPVEVQK (117 aa)). Basic and acidic residues-rich tracts occupy residues 89–103 (EKTESKESVKEEKQA) and 152–163 (RKQDVEAYEKPA). The Peripheral subunit-binding (PSBD) domain maps to 123–160 (IASPSARKLAREKGIDLSQVPTGDPLGRVRKQDVEAYE). Over residues 164–182 (SKPAPQQKQQPQAQKAQQS) the composition is skewed to low complexity. Active-site residues include His388 and Asp392.

It belongs to the 2-oxoacid dehydrogenase family. In terms of assembly, forms a 24-polypeptide structural core with octahedral symmetry. Part of the 2-oxoglutarate dehydrogenase (OGDH) complex composed of E1 (2-oxoglutarate dehydrogenase), E2 (dihydrolipoamide succinyltransferase) and E3 (dihydrolipoamide dehydrogenase); the complex contains multiple copies of the three enzymatic components (E1, E2 and E3). Requires (R)-lipoate as cofactor.

It carries out the reaction N(6)-[(R)-dihydrolipoyl]-L-lysyl-[protein] + succinyl-CoA = N(6)-[(R)-S(8)-succinyldihydrolipoyl]-L-lysyl-[protein] + CoA. Its pathway is amino-acid degradation; L-lysine degradation via saccharopine pathway; glutaryl-CoA from L-lysine: step 6/6. In terms of biological role, E2 component of the 2-oxoglutarate dehydrogenase (OGDH) complex which catalyzes the second step in the conversion of 2-oxoglutarate to succinyl-CoA and CO(2). This is Dihydrolipoyllysine-residue succinyltransferase component of 2-oxoglutarate dehydrogenase complex (odhB) from Bacillus subtilis (strain 168).